A 78-amino-acid polypeptide reads, in one-letter code: Small ribosomal subunit protein uS17 (78 aa).

The protein belongs to the universal ribosomal protein uS17 family. Part of the 30S ribosomal subunit.

Functionally, one of the primary rRNA binding proteins, it binds specifically to the 5'-end of 16S ribosomal RNA. The sequence is that of Small ribosomal subunit protein uS17 from Sinorhizobium medicae (strain WSM419) (Ensifer medicae).